Consider the following 945-residue polypeptide: Isoleucine--tRNA ligase (945 aa).

The short motif at 67-77 is the 'HIGH' region element; sequence PYANGQIHLGH. Glu-573 contributes to the L-isoleucyl-5'-AMP binding site. Residues 614-618 carry the 'KMSKS' region motif; the sequence is KMSKS. Lys-617 contacts ATP. Residues Cys-908, Cys-911, Cys-928, and Cys-931 each contribute to the Zn(2+) site.

This sequence belongs to the class-I aminoacyl-tRNA synthetase family. IleS type 1 subfamily. Monomer. The cofactor is Zn(2+).

Its subcellular location is the cytoplasm. The enzyme catalyses tRNA(Ile) + L-isoleucine + ATP = L-isoleucyl-tRNA(Ile) + AMP + diphosphate. Catalyzes the attachment of isoleucine to tRNA(Ile). As IleRS can inadvertently accommodate and process structurally similar amino acids such as valine, to avoid such errors it has two additional distinct tRNA(Ile)-dependent editing activities. One activity is designated as 'pretransfer' editing and involves the hydrolysis of activated Val-AMP. The other activity is designated 'posttransfer' editing and involves deacylation of mischarged Val-tRNA(Ile). This chain is Isoleucine--tRNA ligase, found in Acinetobacter baylyi (strain ATCC 33305 / BD413 / ADP1).